The sequence spans 188 residues: Kininogen (188 aa).

N-linked (GlcNAc...) asparagine glycosylation is found at N36, N150, and N182.

Bradykinin is released from kininogen by kallikrein. In terms of processing, N-glycosylated. Contains O-acetylated sialic acids as terminal elements on biantennary and triantennary N-glycans.

Functionally, inhibits papain and ficin (cysteine proteinases) but not trypsin (a serine proteinase). This chain is Kininogen, found in Anarhichas minor (Arctic spotted wolffish).